The following is a 483-amino-acid chain: Membrane-bound lytic murein transglycosylase F (483 aa).

Positions methionine 1 to alanine 18 are cleaved as a signal peptide. The non-LT domain stretch occupies residues tryptophan 19–leucine 267. Residues histidine 269–glutamate 483 are LT domain. The active site involves glutamate 312. A disordered region spans residues glutamine 458 to glutamate 483. Residues isoleucine 473–glutamate 483 are compositionally biased toward basic and acidic residues.

This sequence in the N-terminal section; belongs to the bacterial solute-binding protein 3 family. In the C-terminal section; belongs to the transglycosylase Slt family.

The protein localises to the cell outer membrane. It catalyses the reaction Exolytic cleavage of the (1-&gt;4)-beta-glycosidic linkage between N-acetylmuramic acid (MurNAc) and N-acetylglucosamine (GlcNAc) residues in peptidoglycan, from either the reducing or the non-reducing ends of the peptidoglycan chains, with concomitant formation of a 1,6-anhydrobond in the MurNAc residue.. Its function is as follows. Murein-degrading enzyme that degrades murein glycan strands and insoluble, high-molecular weight murein sacculi, with the concomitant formation of a 1,6-anhydromuramoyl product. Lytic transglycosylases (LTs) play an integral role in the metabolism of the peptidoglycan (PG) sacculus. Their lytic action creates space within the PG sacculus to allow for its expansion as well as for the insertion of various structures such as secretion systems and flagella. The chain is Membrane-bound lytic murein transglycosylase F from Actinobacillus pleuropneumoniae serotype 5b (strain L20).